The sequence spans 130 residues: MAKRKVVKKKVVKKNIAKGIVYISATFNNTMVTVTDEMGNAIAWSSAGGLGFKGSKKSTPYAAQQAVEDALNKAKEHGIKEVGIKVQGPGSGRETAVKSVGAMEGIKVTFLKDITPLAHNGCRPPKRRRV.

The protein belongs to the universal ribosomal protein uS11 family. As to quaternary structure, part of the 30S ribosomal subunit. Interacts with proteins S7 and S18. Binds to IF-3.

Its function is as follows. Located on the platform of the 30S subunit, it bridges several disparate RNA helices of the 16S rRNA. Forms part of the Shine-Dalgarno cleft in the 70S ribosome. The polypeptide is Small ribosomal subunit protein uS11 (Campylobacter lari (strain RM2100 / D67 / ATCC BAA-1060)).